A 404-amino-acid polypeptide reads, in one-letter code: Protein ORF23 (404 aa).

This sequence belongs to the lymphocryptovirus BTRF1 family. As to quaternary structure, interacts with ORF34.

Its subcellular location is the host nucleus. It is found in the host cytoplasm. Plays a role in the expression of late genes. This is Protein ORF23 (ORF23) from Homo sapiens (Human).